Consider the following 740-residue polypeptide: E3 ubiquitin-protein ligase TRIM9 (740 aa).

Residues 7–30 (CPTCKQLYANPVLLPCFHALCLGC) form an RING-type; degenerate zinc finger. Residues 64–73 (GNGGGAGGGA) are compositionally biased toward gly residues. The segment at 64-114 (GNGGGAGGGAAAPVTNPNGPGTRHSSHSSAASTASSNTGSESVTSDQDQSD) is disordered. Low complexity predominate over residues 74–105 (AAPVTNPNGPGTRHSSHSSAASTASSNTGSES). The B box-type 1; atypical zinc-finger motif lies at 195–244 (REALRCQMCETDPKVASLICEQCEIRYCDACRELTHPARGPLAKHTLVKP). The Zn(2+) site is built by Cys200, Cys203, Cys225, His230, Cys255, His258, Cys277, and His283. A B box-type 2 zinc finger spans residues 250–291 (QRESVCGEHEETLSQYCLSCKAPACGLCIGELRHQAHDVQSI). Residues 294–324 (TCKAQKTELSHNLQQLSEKARSTTEFIQRLK) adopt a coiled-coil conformation. Residues 399 to 459 (LKETDSAAFL…ARAIDNLNFI (61 aa)) enclose the COS domain. One can recognise a Fibronectin type-III domain in the interval 474–567 (APMTPTILPS…ELIGLQTAEV (94 aa)). The B30.2/SPRY domain occupies 549–736 (NSAGEGEYSE…TMHTAMDAPK (188 aa)).

It belongs to the TRIM/RBCC family. Interacts (via fibronectin type-III domain) with pico. Interacts (via SPRY domain) with netrin receptor fra.

The protein localises to the cell projection. Its subcellular location is the axon. It is found in the perikaryon. It catalyses the reaction S-ubiquitinyl-[E2 ubiquitin-conjugating enzyme]-L-cysteine + [acceptor protein]-L-lysine = [E2 ubiquitin-conjugating enzyme]-L-cysteine + N(6)-ubiquitinyl-[acceptor protein]-L-lysine.. It participates in protein modification; protein ubiquitination. E3 ubiquitin-protein ligase activity. During embryonic and larval development, regulates the pattern of axonal projections of class IV nociceptive sensory neurons (C4da) downstream of netrin receptor fra. Regulates fine-scale topography of C4da axon terminals upon neuronal activity. During eye development, consolidates the attachment of R8 photoreceptor growth cones to the target medulla layer, probably downstream of fra. In Drosophila melanogaster (Fruit fly), this protein is E3 ubiquitin-protein ligase TRIM9.